We begin with the raw amino-acid sequence, 480 residues long: Aromatic-L-amino-acid decarboxylase (480 aa).

An N-acetylmethionine modification is found at M1. 2 repeat units span residues 58–115 (RDIE…TELE) and 118–178 (MMDW…TQAA). The segment at 58–178 (RDIEKIIMPG…AASPELTQAA (121 aa)) is 2 X approximate tandem repeats. T82 provides a ligand contact to substrate. The pyridoxal 5'-phosphate site is built by A148 and S149. Substrate is bound at residue H192. Pyridoxal 5'-phosphate-binding residues include T246 and N300. Position 303 is an N6-(pyridoxal phosphate)lysine (K303).

This sequence belongs to the group II decarboxylase family. As to quaternary structure, homodimer. Pyridoxal 5'-phosphate serves as cofactor.

The catalysed reaction is L-dopa + H(+) = dopamine + CO2. It catalyses the reaction 5-hydroxy-L-tryptophan + H(+) = serotonin + CO2. It participates in catecholamine biosynthesis; dopamine biosynthesis; dopamine from L-tyrosine: step 2/2. In terms of biological role, catalyzes the decarboxylation of L-3,4-dihydroxyphenylalanine (DOPA) to dopamine and L-5-hydroxytryptophan to serotonin. This Rattus norvegicus (Rat) protein is Aromatic-L-amino-acid decarboxylase.